The chain runs to 327 residues: Zinc transport protein ZntB (327 aa).

Topologically, residues 1-273 (MEAIKGSDVN…ARRTYTMSLM (273 aa)) are cytoplasmic. A helical transmembrane segment spans residues 274 to 294 (AMVFLPSTFLTGLFGVNLGGI). Residues 295–300 (PGGGWQ) lie on the Periplasmic side of the membrane. A helical membrane pass occupies residues 301–321 (FGFSIFCILLVVLIGGVALWL). The Cytoplasmic segment spans residues 322-327 (HRSKWL).

This sequence belongs to the CorA metal ion transporter (MIT) (TC 1.A.35) family.

Its subcellular location is the cell inner membrane. The catalysed reaction is Zn(2+)(out) + H(+)(out) = Zn(2+)(in) + H(+)(in). In terms of biological role, zinc transporter. Acts as a Zn(2+):proton symporter, which likely mediates zinc ion uptake. The chain is Zinc transport protein ZntB from Escherichia coli O8 (strain IAI1).